A 350-amino-acid chain; its full sequence is tRNA uridine(34) hydroxylase (350 aa).

Residues 146 to 240 (DDPDALFIDM…YARKAREQGL (95 aa)) enclose the Rhodanese domain. Cys200 functions as the Cysteine persulfide intermediate in the catalytic mechanism.

It belongs to the TrhO family.

It carries out the reaction uridine(34) in tRNA + AH2 + O2 = 5-hydroxyuridine(34) in tRNA + A + H2O. Its function is as follows. Catalyzes oxygen-dependent 5-hydroxyuridine (ho5U) modification at position 34 in tRNAs, the first step in 5-carboxymethoxyuridine (cmo5U) biosynthesis. May be part of an alternate pathway, which is able to bypass cmo5U biogenesis in a subset of tRNAs under aerobic conditions. In Escherichia coli O9:H4 (strain HS), this protein is tRNA uridine(34) hydroxylase.